The following is a 357-amino-acid chain: NADH-quinone oxidoreductase subunit H (357 aa).

8 helical membrane-spanning segments follow: residues 20–40 (WLVV…ILCV), 92–112 (ILFI…WAVV), 127–147 (LLYV…AGWA), 165–185 (VSYE…SGSL), 206–226 (FLSW…ISAV), 268–288 (ILLS…PIDI), 294–314 (IPGW…FIWF), and 329–349 (LGWK…AIWM).

The protein belongs to the complex I subunit 1 family. NDH-1 is composed of 14 different subunits. Subunits NuoA, H, J, K, L, M, N constitute the membrane sector of the complex.

It is found in the cell inner membrane. It carries out the reaction a quinone + NADH + 5 H(+)(in) = a quinol + NAD(+) + 4 H(+)(out). NDH-1 shuttles electrons from NADH, via FMN and iron-sulfur (Fe-S) centers, to quinones in the respiratory chain. The immediate electron acceptor for the enzyme in this species is believed to be ubiquinone. Couples the redox reaction to proton translocation (for every two electrons transferred, four hydrogen ions are translocated across the cytoplasmic membrane), and thus conserves the redox energy in a proton gradient. This subunit may bind ubiquinone. The polypeptide is NADH-quinone oxidoreductase subunit H (Bordetella avium (strain 197N)).